Reading from the N-terminus, the 297-residue chain is Pyridoxal 5'-phosphate synthase subunit PdxS (297 aa).

Position 27 (Asp-27) interacts with D-ribose 5-phosphate. Catalysis depends on Lys-84, which acts as the Schiff-base intermediate with D-ribose 5-phosphate. Gly-156 contacts D-ribose 5-phosphate. Residue Arg-168 participates in D-glyceraldehyde 3-phosphate binding. D-ribose 5-phosphate contacts are provided by residues Gly-217 and 238–239 (GS).

It belongs to the PdxS/SNZ family. As to quaternary structure, in the presence of PdxT, forms a dodecamer of heterodimers.

It carries out the reaction aldehydo-D-ribose 5-phosphate + D-glyceraldehyde 3-phosphate + L-glutamine = pyridoxal 5'-phosphate + L-glutamate + phosphate + 3 H2O + H(+). It functions in the pathway cofactor biosynthesis; pyridoxal 5'-phosphate biosynthesis. In terms of biological role, catalyzes the formation of pyridoxal 5'-phosphate from ribose 5-phosphate (RBP), glyceraldehyde 3-phosphate (G3P) and ammonia. The ammonia is provided by the PdxT subunit. Can also use ribulose 5-phosphate and dihydroxyacetone phosphate as substrates, resulting from enzyme-catalyzed isomerization of RBP and G3P, respectively. The sequence is that of Pyridoxal 5'-phosphate synthase subunit PdxS from Corynebacterium diphtheriae (strain ATCC 700971 / NCTC 13129 / Biotype gravis).